The sequence spans 341 residues: GDT1-like protein 1, chloroplastic (341 aa).

Residues 1 to 13 are compositionally biased toward low complexity; the sequence is MASVASSTVFASS. Disordered stretches follow at residues 1-41 and 54-76; these read MASV…GRSV and VVTR…GGGR. The transit peptide at 1 to 57 directs the protein to the chloroplast; it reads MASVASSTVFASSLPHHRATTRAPPTPPRIPRRARLPGRSVVSCLPKRGSEKLVVTR. Transmembrane regions (helical) follow at residues 79-99, 117-137, 158-178, 203-223, 246-266, 286-306, and 318-338; these read PSLD…VLML, VVGD…LIFF, AIIF…SVVL, FLAA…AASG, GAGI…VFIA, LGVI…AVLG, and IVAY…LVEI.

It belongs to the GDT1 family.

The protein resides in the plastid. The protein localises to the chloroplast membrane. The chain is GDT1-like protein 1, chloroplastic from Oryza sativa subsp. indica (Rice).